Here is a 274-residue protein sequence, read N- to C-terminus: Probable eukaryotic translation initiation factor 3 subunit J (274 aa).

Disordered stretches follow at residues 1 to 110 (MDSW…KEAM) and 207 to 245 (KEQQ…NVNS). Positions 38–47 (DEEDEDEEEN) are enriched in acidic residues. Over residues 52 to 73 (QNDSHSVSQKSSSSSQNDQGSN) the composition is skewed to low complexity. Residues 82-110 (IQERNFEKAIKASEAAAKEESLESSKEAM) show a composition bias toward basic and acidic residues. A compositionally biased stretch (low complexity) spans 219 to 234 (AAAPAAKPVSTAAPSK).

This sequence belongs to the eIF-3 subunit J family. As to quaternary structure, component of the eukaryotic translation initiation factor 3 (eIF-3) complex. The eIF-3 complex appears to include tif32/eif3a, SPAC25G10.08/eif3b, tif33/eif3c, SPBC4C3.07/eif3f, tif35/eif3g and sum1/eif3i. This set of common subunits may also associate exclusively with either moe1/eif3d and int6/eif3e, or with SPAC821.05/eif3h and SPAC1751.03/eif3m. The eIF-3 complex may also include SPAC3A12.13c/eif3j. Interacts with sad1.

It localises to the cytoplasm. Its function is as follows. Component of the eukaryotic translation initiation factor 3 (eIF-3) complex, which is involved in protein synthesis of a specialized repertoire of mRNAs and, together with other initiation factors, stimulates binding of mRNA and methionyl-tRNAi to the 40S ribosome. The eIF-3 complex specifically targets and initiates translation of a subset of mRNAs involved in cell proliferation. The chain is Probable eukaryotic translation initiation factor 3 subunit J from Schizosaccharomyces pombe (strain 972 / ATCC 24843) (Fission yeast).